Consider the following 40-residue polypeptide: Photosystem II reaction center protein J (40 aa).

A helical membrane pass occupies residues 8 to 28; sequence IPLWLIGTVTGTLVIGLIGIF.

It belongs to the PsbJ family. As to quaternary structure, PSII is composed of 1 copy each of membrane proteins PsbA, PsbB, PsbC, PsbD, PsbE, PsbF, PsbH, PsbI, PsbJ, PsbK, PsbL, PsbM, PsbT, PsbX, PsbY, PsbZ, Psb30/Ycf12, at least 3 peripheral proteins of the oxygen-evolving complex and a large number of cofactors. It forms dimeric complexes.

The protein resides in the plastid. Its subcellular location is the chloroplast thylakoid membrane. Functionally, one of the components of the core complex of photosystem II (PSII). PSII is a light-driven water:plastoquinone oxidoreductase that uses light energy to abstract electrons from H(2)O, generating O(2) and a proton gradient subsequently used for ATP formation. It consists of a core antenna complex that captures photons, and an electron transfer chain that converts photonic excitation into a charge separation. In Cycas taitungensis (Prince sago), this protein is Photosystem II reaction center protein J.